The primary structure comprises 100 residues: Urease subunit gamma (100 aa).

It belongs to the urease gamma subunit family. As to quaternary structure, heterotrimer of UreA (gamma), UreB (beta) and UreC (alpha) subunits. Three heterotrimers associate to form the active enzyme.

It is found in the cytoplasm. It carries out the reaction urea + 2 H2O + H(+) = hydrogencarbonate + 2 NH4(+). The protein operates within nitrogen metabolism; urea degradation; CO(2) and NH(3) from urea (urease route): step 1/1. In Enterobacter sp. (strain 638), this protein is Urease subunit gamma.